We begin with the raw amino-acid sequence, 179 residues long: Small ribosomal subunit protein eS10x (179 aa).

The segment at 90–179 (TLKKSAKPGG…AAAPSGSGLP (90 aa)) is disordered. Residues 108–129 (DRSRGPRHEGGDRPRFGDRDGY) show a composition bias toward basic and acidic residues. A compositionally biased stretch (gly residues) spans 134 to 144 (RAGGEFGGEKG). The span at 145 to 156 (GAPADYQPSFQG) shows a compositional bias: low complexity. The segment covering 157 to 167 (SGRGFGRGAGG) has biased composition (gly residues). Low complexity predominate over residues 168–179 (YSAAAPSGSGLP).

It belongs to the eukaryotic ribosomal protein eS10 family.

Its subcellular location is the cytoplasm. This is Small ribosomal subunit protein eS10x (RPS10C) from Arabidopsis thaliana (Mouse-ear cress).